The sequence spans 108 residues: DNA-binding protein HBbu (108 aa).

This sequence belongs to the bacterial histone-like protein family.

Histone-like DNA-binding protein which is capable of wrapping DNA to stabilize it, and thus to prevent its denaturation under extreme environmental conditions. In Borreliella afzelii (Borrelia afzelii), this protein is DNA-binding protein HBbu (hbb).